The following is a 631-amino-acid chain: Phosphomethylpyrimidine synthase (631 aa).

Residues asparagine 239, methionine 268, tyrosine 297, histidine 333, 353-355, 394-397, and glutamate 433 contribute to the substrate site; these read SRG and DGLR. Histidine 437 serves as a coordination point for Zn(2+). Tyrosine 460 is a binding site for substrate. Residue histidine 501 coordinates Zn(2+). [4Fe-4S] cluster-binding residues include cysteine 581, cysteine 584, and cysteine 589.

Belongs to the ThiC family. In terms of assembly, homodimer. [4Fe-4S] cluster is required as a cofactor.

The catalysed reaction is 5-amino-1-(5-phospho-beta-D-ribosyl)imidazole + S-adenosyl-L-methionine = 4-amino-2-methyl-5-(phosphooxymethyl)pyrimidine + CO + 5'-deoxyadenosine + formate + L-methionine + 3 H(+). Its pathway is cofactor biosynthesis; thiamine diphosphate biosynthesis. Its function is as follows. Catalyzes the synthesis of the hydroxymethylpyrimidine phosphate (HMP-P) moiety of thiamine from aminoimidazole ribotide (AIR) in a radical S-adenosyl-L-methionine (SAM)-dependent reaction. This Citrobacter koseri (strain ATCC BAA-895 / CDC 4225-83 / SGSC4696) protein is Phosphomethylpyrimidine synthase.